The primary structure comprises 1299 residues: DNA-directed RNA polymerase subunit beta' (1299 aa).

The Zn(2+) site is built by cysteine 60, cysteine 62, cysteine 75, and cysteine 78. The Mg(2+) site is built by aspartate 535, aspartate 537, and aspartate 539. Zn(2+)-binding residues include cysteine 877, cysteine 954, cysteine 961, and cysteine 964.

Belongs to the RNA polymerase beta' chain family. In terms of assembly, the RNAP catalytic core consists of 2 alpha, 1 beta, 1 beta' and 1 omega subunit. When a sigma factor is associated with the core the holoenzyme is formed, which can initiate transcription. Mg(2+) is required as a cofactor. It depends on Zn(2+) as a cofactor.

The enzyme catalyses RNA(n) + a ribonucleoside 5'-triphosphate = RNA(n+1) + diphosphate. Functionally, DNA-dependent RNA polymerase catalyzes the transcription of DNA into RNA using the four ribonucleoside triphosphates as substrates. The protein is DNA-directed RNA polymerase subunit beta' of Pseudarthrobacter chlorophenolicus (strain ATCC 700700 / DSM 12829 / CIP 107037 / JCM 12360 / KCTC 9906 / NCIMB 13794 / A6) (Arthrobacter chlorophenolicus).